Consider the following 771-residue polypeptide: Dol-P-Glc:Glc(2)Man(9)GlcNAc(2)-PP-Dol alpha-1,2-glucosyltransferase (771 aa).

The next 7 helical transmembrane spans lie at 45–65 (FITA…LALV), 160–180 (VSFY…IFFF), 182–202 (GLYY…WNHL), 221–241 (VVLG…VVVY), 293–313 (VDMA…IAAL), 326–346 (HITI…VVLG), and 357–377 (LPQM…LLIP). The segment at 392-449 (TPTPSHTTTKDPGRSSWRFTKPSITSKKSSTTKPPQRSGPTPASSSSSSSSFSPDTNS) is disordered. 2 stretches are compositionally biased toward low complexity: residues 411–426 (TKPS…TKPP) and 435–449 (SSSS…DTNS). The N-linked (GlcNAc...) asparagine glycan is linked to Asn-448. 2 helical membrane passes run 469–489 (PFYL…NTII) and 503–525 (YIFR…AYTL). Positions 584–593 (QKNIKDKQKE) are enriched in basic and acidic residues. The tract at residues 584-605 (QKNIKDKQKEVEEEEEEEEKED) is disordered. A compositionally biased stretch (acidic residues) spans 594–604 (VEEEEEEEEKE). Helical transmembrane passes span 631-651 (TSTV…APLV) and 656-676 (FILP…SSSL). Residues 682–708 (SSSFASSTTESGNGDGNDAATAARQQQ) form a disordered region. The helical transmembrane segment at 728–748 (LALETVWFLAINIGTMYMFLF) threads the bilayer.

The protein belongs to the ALG10 glucosyltransferase family.

It is found in the endoplasmic reticulum membrane. It carries out the reaction an alpha-D-Glc-(1-&gt;3)-alpha-D-Glc-(1-&gt;3)-alpha-D-Man-(1-&gt;2)-alpha-D-Man-(1-&gt;2)-alpha-D-Man-(1-&gt;3)-[alpha-D-Man-(1-&gt;2)-alpha-D-Man-(1-&gt;3)-[alpha-D-Man-(1-&gt;2)-alpha-D-Man-(1-&gt;6)]-alpha-D-Man-(1-&gt;6)]-beta-D-Man-(1-&gt;4)-beta-D-GlcNAc-(1-&gt;4)-alpha-D-GlcNAc-diphospho-di-trans,poly-cis-dolichol + a di-trans,poly-cis-dolichyl beta-D-glucosyl phosphate = a alpha-D-Glc-(1-&gt;2)-alpha-D-Glc-(1-&gt;3)-alpha-D-Glc-(1-&gt;3)-alpha-D-Man-(1-&gt;2)-alpha-D-Man-(1-&gt;2)-alpha-D-Man-(1-&gt;3)-[alpha-D-Man-(1-&gt;2)-alpha-D-Man-(1-&gt;3)-[alpha-D-Man-(1-&gt;2)-alpha-D-Man-(1-&gt;6)]-alpha-D-Man-(1-&gt;6)]-beta-D-Man-(1-&gt;4)-beta-D-GlcNAc-(1-&gt;4)-alpha-D-GlcNAc-diphospho-di-trans,poly-cis-dolichol + a di-trans,poly-cis-dolichyl phosphate + H(+). The protein operates within protein modification; protein glycosylation. Dol-P-Glc:Glc(2)Man(9)GlcNAc(2)-PP-Dol alpha-1,2-glucosyltransferase that operates in the biosynthetic pathway of dolichol-linked oligosaccharides, the glycan precursors employed in protein asparagine (N)-glycosylation. The assembly of dolichol-linked oligosaccharides begins on the cytosolic side of the endoplasmic reticulum membrane and finishes in its lumen. The sequential addition of sugars to dolichol pyrophosphate produces dolichol-linked oligosaccharides containing fourteen sugars, including two GlcNAcs, nine mannoses and three glucoses. Once assembled, the oligosaccharide is transferred from the lipid to nascent proteins by oligosaccharyltransferases. In the lumen of the endoplasmic reticulum, adds the third and last glucose residue from dolichyl phosphate glucose (Dol-P-Glc) onto the lipid-linked oligosaccharide intermediate Glc(2)Man(9)GlcNAc(2)-PP-Dol to produce Glc(3)Man(9)GlcNAc(2)-PP-Dol. In Neurospora crassa (strain ATCC 24698 / 74-OR23-1A / CBS 708.71 / DSM 1257 / FGSC 987), this protein is Dol-P-Glc:Glc(2)Man(9)GlcNAc(2)-PP-Dol alpha-1,2-glucosyltransferase (alg-10).